Consider the following 143-residue polypeptide: Transcriptional regulator MraZ (143 aa).

SpoVT-AbrB domains lie at glutamate 5–glutamate 47 and alanine 76–isoleucine 119.

The protein belongs to the MraZ family. As to quaternary structure, forms oligomers.

The protein resides in the cytoplasm. Its subcellular location is the nucleoid. In Bacillus subtilis (strain 168), this protein is Transcriptional regulator MraZ.